Here is a 78-residue protein sequence, read N- to C-terminus: Small ribosomal subunit protein bS18B (78 aa).

This sequence belongs to the bacterial ribosomal protein bS18 family. As to quaternary structure, part of the 30S ribosomal subunit. Forms a tight heterodimer with protein bS6.

In terms of biological role, binds as a heterodimer with protein bS6 to the central domain of the 16S rRNA, where it helps stabilize the platform of the 30S subunit. This Streptomyces griseus subsp. griseus (strain JCM 4626 / CBS 651.72 / NBRC 13350 / KCC S-0626 / ISP 5235) protein is Small ribosomal subunit protein bS18B.